The sequence spans 134 residues: ATP synthase epsilon chain, chloroplastic (134 aa).

This sequence belongs to the ATPase epsilon chain family. F-type ATPases have 2 components, CF(1) - the catalytic core - and CF(0) - the membrane proton channel. CF(1) has five subunits: alpha(3), beta(3), gamma(1), delta(1), epsilon(1). CF(0) has three main subunits: a, b and c.

The protein localises to the plastid. It is found in the chloroplast thylakoid membrane. In terms of biological role, produces ATP from ADP in the presence of a proton gradient across the membrane. This Chlorella vulgaris (Green alga) protein is ATP synthase epsilon chain, chloroplastic.